The primary structure comprises 152 residues: ARL14 effector protein-like (152 aa).

Residues 1–16 (MTEPSQKNNSTQQELT) show a composition bias toward polar residues. The tract at residues 1 to 27 (MTEPSQKNNSTQQELTNHLFPEKSSQI) is disordered.

The sequence is that of ARL14 effector protein-like (Arl14epl) from Mus musculus (Mouse).